The following is a 681-amino-acid chain: Proline-rich receptor-like protein kinase PERK8 (681 aa).

Positions 1–11 (MSLVPPLPILS) are enriched in pro residues. The interval 1-231 (MSLVPPLPIL…TLPSSSPGKS (231 aa)) is disordered. At 1 to 237 (MSLVPPLPIL…PGKSEVGTGG (237 aa)) the chain is on the extracellular side. Asn-16 carries N-linked (GlcNAc...) asparagine glycosylation. Positions 21–163 (APPPLQTQPT…SPPKPSPSTP (143 aa)) are enriched in pro residues. Positions 177–191 (TSASPPSSNPTDPST) are enriched in low complexity. Pro residues predominate over residues 192–201 (LAPPPTPLPV). Residues 214 to 229 (PASNNGNNTLPSSSPG) show a composition bias toward polar residues. N-linked (GlcNAc...) asparagine glycosylation occurs at Asn-220. The chain crosses the membrane as a helical span at residues 238-258 (IVAIGVIVGLVFLSLFVMGVW). Topologically, residues 259-681 (FTRKRKRKDP…GSRDQSRFVP (423 aa)) are cytoplasmic. In terms of domain architecture, Protein kinase spans 339-617 (FSEKNLLGEG…SQVVRALDTL (279 aa)). Residues 345 to 353 (LGEGGFGCV) and Lys-367 contribute to the ATP site. Tyr-412 carries the phosphotyrosine modification. Catalysis depends on Asp-463, which acts as the Proton acceptor. A phosphoserine mark is found at Ser-467 and Ser-498. Phosphothreonine occurs at positions 499 and 504. At Tyr-512 the chain carries Phosphotyrosine.

It belongs to the protein kinase superfamily. Ser/Thr protein kinase family. Interacts with KIPK1 and KIPK2 (via its cytosolic domain). In terms of tissue distribution, mostly expressed in seedlings, roots, inflorescence bolts and flower buds.

Its subcellular location is the cell membrane. It catalyses the reaction L-seryl-[protein] + ATP = O-phospho-L-seryl-[protein] + ADP + H(+). It carries out the reaction L-threonyl-[protein] + ATP = O-phospho-L-threonyl-[protein] + ADP + H(+). Functionally, could be involved in the negative regulation of root growth. This is Proline-rich receptor-like protein kinase PERK8 (PERK8) from Arabidopsis thaliana (Mouse-ear cress).